Reading from the N-terminus, the 766-residue chain is Pentatricopeptide repeat-containing protein At3g61520, mitochondrial (766 aa).

The N-terminal 30 residues, 1–30 (MSIMLSISRRRNSYILLNHSRFLRRFSYDV), are a transit peptide targeting the mitochondrion. PPR repeat units lie at residues 151 to 181 (TVVATNLLIRWFGRMGMVNQSVLVYERLDSN), 184 to 218 (NSQVRNVVVDVLLRNGLVDDAFKVLDEMLQKESVF), 221 to 257 (NRITADIVLHEVWKGRLLTEEKIIALISRFSSHGVSP), 258 to 292 (NSVWLTRFISSLCKNARANAAWDILSDLMKNKTPL), 293 to 327 (EAPPFNALLSCLGRNMDISRMNDLVLKMDEVKIRP), 328 to 358 (DVVTLGILINTLCKSRRVDEALEVFEKMRGK), 369 to 404 (DSIHFNTLIDGLCKVGRLKEAEELLVRMKLEERCAP), 405 to 439 (NAVTYNCLIDGYCRAGKLETAKEVVSRMKEDEIKP), 440 to 474 (NVVTVNTIVGGMCRHHGLNMAVVFFMDMEKEGVKG), 475 to 509 (NVVTYMTLIHACCSVSNVEKAMYWYEKMLEAGCSP), 510 to 544 (DAKIYYALISGLCQVRRDHDAIRVVEKLKEGGFSL), 545 to 579 (DLLAYNMLIGLFCDKNNTEKVYEMLTDMEKEGKKP), 580 to 614 (DSITYNTLISFFGKHKDFESVERMMEQMREDGLDP), 615 to 650 (TVTTYGAVIDAYCSVGELDEALKLFKDMGLHSKVNP), 651 to 685 (NTVIYNILINAFSKLGNFGQALSLKEEMKMKMVRP), and 686 to 720 (NVETYNALFKCLNEKTQGETLLKLMDEMVEQSCEP).

It belongs to the PPR family. P subfamily.

The protein resides in the mitochondrion. This chain is Pentatricopeptide repeat-containing protein At3g61520, mitochondrial, found in Arabidopsis thaliana (Mouse-ear cress).